Consider the following 257-residue polypeptide: Major prion protein (257 aa).

An N-terminal signal peptide occupies residues 1–24; sequence MVKSHIGSWLLVLFVATWSDIGFC. The segment at 25–234 is interaction with GRB2, ERI3 and SYN1; that stretch reads KKRPKPGGGW…ESEAYYQRGA (210 aa). The interval 27-114 is disordered; sequence RPKPGGGWNT…KPSKPKTNMK (88 aa). Tandem repeats lie at residues 54–62, 63–70, 71–78, 79–86, and 87–95. The tract at residues 54-95 is 5 X 8 AA tandem repeats of P-H-G-G-G-W-G-Q; sequence PQGGGGWGQPHGGGWGQPHGGGWGQPHGGGWGQPHGGGGWGQ. Over residues 55-101 the composition is skewed to gly residues; sequence QGGGGWGQPHGGGWGQPHGGGWGQPHGGGWGQPHGGGGWGQGGGSHG. H64, G65, G66, H72, G73, G74, H80, G81, G82, H88, G90, and G91 together coordinate Cu(2+). Cysteines 183 and 218 form a disulfide. Residues N185 and N201 are each glycosylated (N-linked (GlcNAc...) asparagine). A lipid anchor (GPI-anchor amidated alanine) is attached at A234. Positions 235–257 are cleaved as a propeptide — removed in mature form; sequence SAILFSPPPVILLISLLILLIVG.

This sequence belongs to the prion family. Monomer and homodimer. Has a tendency to aggregate into amyloid fibrils containing a cross-beta spine, formed by a steric zipper of superposed beta-strands. Soluble oligomers may represent an intermediate stage on the path to fibril formation. Copper binding may promote oligomerization. Interacts with GRB2, APP, ERI3/PRNPIP and SYN1. Mislocalized cytosolically exposed PrP interacts with MGRN1; this interaction alters MGRN1 subcellular location and causes lysosomal enlargement. Interacts with KIAA1191.

The protein resides in the cell membrane. The protein localises to the golgi apparatus. Functionally, its primary physiological function is unclear. Has cytoprotective activity against internal or environmental stresses. May play a role in neuronal development and synaptic plasticity. May be required for neuronal myelin sheath maintenance. May play a role in iron uptake and iron homeostasis. Soluble oligomers are toxic to cultured neuroblastoma cells and induce apoptosis (in vitro). Association with GPC1 (via its heparan sulfate chains) targets PRNP to lipid rafts. Also provides Cu(2+) or Zn(2+) for the ascorbate-mediated GPC1 deaminase degradation of its heparan sulfate side chains. In Mustela putorius furo (European domestic ferret), this protein is Major prion protein (PRNP).